A 987-amino-acid polypeptide reads, in one-letter code: UPF0182 protein DIP0733 (987 aa).

The next 7 helical transmembrane spans lie at 19–39 (LTWLIPLLMILGALVPTVVDL), 63–83 (IGLFVGFGLLAGIVTFLAGWF), 115–135 (FLVVLPVVIGIAAGFLGQQAW), 176–196 (SVLLVVAFLIALVGHYLLGGI), 212–234 (YAKVQLAVTGGLYLLVRMASYWL), 261–281 (AKIVLLVISAVVAISFFSVIV), and 290–310 (ISTVLMIVSSLAIGNAWPIMM). Positions 904–927 (DLGEAKGLKPESQNRDKPEDKEGK) are enriched in basic and acidic residues. A disordered region spans residues 904–950 (DLGEAKGLKPESQNRDKPEDKEGKAPSTPSAPASGSGTTGEAIGKIN). Positions 928-943 (APSTPSAPASGSGTTG) are enriched in low complexity.

It belongs to the UPF0182 family.

The protein resides in the cell membrane. In Corynebacterium diphtheriae (strain ATCC 700971 / NCTC 13129 / Biotype gravis), this protein is UPF0182 protein DIP0733.